The sequence spans 478 residues: Cytochrome c-552 (478 aa).

The signal sequence occupies residues Met1–Ala26. Position 94 (His94) interacts with heme c. Residues Cys122, Cys125, and Lys126 each contribute to the heme site. Residues Cys160, Cys163, His164, Cys209, Cys212, and His213 each contribute to the heme c site. Ca(2+)-binding residues include Glu215, Tyr216, Lys261, and Gln263. Tyr216 serves as a coordination point for substrate. His264 contacts substrate. The heme c site is built by His275, Cys282, Cys285, His286, His301, Cys314, Cys317, His318, and His393.

This sequence belongs to the cytochrome c-552 family. The cofactor is Ca(2+). Heme c is required as a cofactor.

The protein localises to the periplasm. The catalysed reaction is 6 Fe(III)-[cytochrome c] + NH4(+) + 2 H2O = 6 Fe(II)-[cytochrome c] + nitrite + 8 H(+). It functions in the pathway nitrogen metabolism; nitrate reduction (assimilation). Functionally, catalyzes the reduction of nitrite to ammonia, consuming six electrons in the process. The polypeptide is Cytochrome c-552 (Salmonella paratyphi A (strain ATCC 9150 / SARB42)).